The chain runs to 321 residues: Aldose reductase C (321 aa).

22–31 (GNQIPSIGLG) provides a ligand contact to NADP(+). The Proton donor role is filled by tyrosine 62. Substrate is bound at residue histidine 124. NADP(+) is bound at residue 227–281 (SPLGQGKCDFFSNKILKSIAGKYKKSVANVIFKWLNQRGIAAIPKSGNHSRIIEN).

It belongs to the aldo/keto reductase family.

The enzyme catalyses an alditol + NAD(+) = an aldose + NADH + H(+). The catalysed reaction is an alditol + NADP(+) = an aldose + NADPH + H(+). In terms of biological role, catalyzes the NADPH-dependent reduction of a wide variety of carbonyl-containing compounds to their corresponding alcohols with a broad range of catalytic efficiencies. This Dictyostelium discoideum (Social amoeba) protein is Aldose reductase C (alrC).